Here is a 715-residue protein sequence, read N- to C-terminus: MTTESLLIELLTEELPPKSLVKLGNAFATLIADSLKQQYLTTPDTVSTVFASPRRLAVHLTAISVQAPDQIVTLKLMPVAVGLDAQGQPTPALHKKLAALGVENVAVSALKRVQEGKAEMLFLEQSVTGILLAAGLQKAVDEAIRQLPVAKMMTYQLDDGWENVHFIRPAHGLIALHGQQIVPISALGFAAGNTTRGHRFEAKQAELVIDHADHYEYILETEGTVIPGFDRRRSRIREGLETATRAAQLQCIEDAALLDEVTALVERPNVLMGTFSADFLEVPQECLISTMKINQKYFPLLDADGKLTNRFLIVSNITPADPGQIIAGNERVIRSRLADAKFFFDHDRKRTLASRLPDLDKVIYHHQLGSQGERTRYVRALAQIIGQLLDNGDLPAQANQAAMLAKADLLTDMVGEFPELQGIMGRYYAQREGVDETIAFAIEDHYKPRFAGDALPRSMTGICVALADKLETLISLFSIGQFPTGDKDPYALRRHALGVIRILIEKDLPIGLDVLISRAAGVLRDEISGEQGPESSHARPVTPQLTEQLQDFFYDRLASSLRDQGYTVQEVESVLNLRPSLLCEIPRRLAAVRAFTALPEAASLAAANKRVSNILKKSEFDATVSIDKACLQAPAEIALYRALSEIESDARHAFQKGDYVTALQMLAALKAPIDAFFDQVMVNDENEVLRRNRLALLAALQATMNRVADISRLAA.

It belongs to the class-II aminoacyl-tRNA synthetase family. As to quaternary structure, tetramer of two alpha and two beta subunits.

The protein localises to the cytoplasm. It carries out the reaction tRNA(Gly) + glycine + ATP = glycyl-tRNA(Gly) + AMP + diphosphate. This is Glycine--tRNA ligase beta subunit from Nitrosomonas eutropha (strain DSM 101675 / C91 / Nm57).